Here is a 797-residue protein sequence, read N- to C-terminus: Protocadherin beta-9 (797 aa).

Positions 1–26 (MKTRGFSFPRQRQVLFLFLFWGVSLA) are cleaved as a signal peptide. Residues 27–690 (GSGFGRYSVT…AQADSLTVYL (664 aa)) are Extracellular-facing. Cadherin domains lie at 35–133 (VTEE…SPVF), 138–242 (MVLK…APQF), 247–347 (YETQ…PPEL), 352–451 (LSNS…APAF), and 456–561 (YTLF…SPFV). N-linked (GlcNAc...) asparagine glycosylation is present at Asn-169. A glycan (N-linked (GlcNAc...) asparagine) is linked at Asn-418. N-linked (GlcNAc...) asparagine glycosylation is present at Asn-567. The 104-residue stretch at 568–671 (GSAPCTELVP…LVDGFSQPYL (104 aa)) folds into the Cadherin 6 domain. A helical transmembrane segment spans residues 691 to 711 (VVALASVSSLFLLSVLLFVAV). The Cytoplasmic portion of the chain corresponds to 712–797 (RLCRRSRAAS…TLHNSFGFNY (86 aa)).

The protein localises to the cell membrane. Its function is as follows. Potential calcium-dependent cell-adhesion protein. May be involved in the establishment and maintenance of specific neuronal connections in the brain. This chain is Protocadherin beta-9 (PCDHB9), found in Pan troglodytes (Chimpanzee).